The sequence spans 489 residues: Glutamyl-tRNA(Gln) amidotransferase subunit A (489 aa).

Active-site charge relay system residues include lysine 80 and serine 160. Catalysis depends on serine 184, which acts as the Acyl-ester intermediate.

It belongs to the amidase family. GatA subfamily. Heterotrimer of A, B and C subunits.

It catalyses the reaction L-glutamyl-tRNA(Gln) + L-glutamine + ATP + H2O = L-glutaminyl-tRNA(Gln) + L-glutamate + ADP + phosphate + H(+). In terms of biological role, allows the formation of correctly charged Gln-tRNA(Gln) through the transamidation of misacylated Glu-tRNA(Gln) in organisms which lack glutaminyl-tRNA synthetase. The reaction takes place in the presence of glutamine and ATP through an activated gamma-phospho-Glu-tRNA(Gln). The protein is Glutamyl-tRNA(Gln) amidotransferase subunit A of Wolbachia sp. subsp. Brugia malayi (strain TRS).